The primary structure comprises 253 residues: Phosphate import ATP-binding protein PstB (253 aa).

The ABC transporter domain maps to 5-248; that stretch reads IETVNLNVYY…PEHELTEKYV (244 aa). 37-44 contributes to the ATP binding site; the sequence is GPSGCGKS.

This sequence belongs to the ABC transporter superfamily. Phosphate importer (TC 3.A.1.7) family. As to quaternary structure, the complex is composed of two ATP-binding proteins (PstB), two transmembrane proteins (PstC and PstA) and a solute-binding protein (PstS).

The protein localises to the cell membrane. The enzyme catalyses phosphate(out) + ATP + H2O = ADP + 2 phosphate(in) + H(+). In terms of biological role, part of the ABC transporter complex PstSACB involved in phosphate import. Responsible for energy coupling to the transport system. The chain is Phosphate import ATP-binding protein PstB from Thermococcus kodakarensis (strain ATCC BAA-918 / JCM 12380 / KOD1) (Pyrococcus kodakaraensis (strain KOD1)).